A 354-amino-acid polypeptide reads, in one-letter code: Glycerol-1-phosphate dehydrogenase [NAD(P)+] (354 aa).

Residues 103-107 and 125-128 each bind NAD(+); these read GRAVD and TAAS. Position 130 (D130) interacts with substrate. S134 is a binding site for NAD(+). D176 provides a ligand contact to substrate. Zn(2+) contacts are provided by D176 and H255. H259 provides a ligand contact to substrate. H271 lines the Zn(2+) pocket.

The protein belongs to the glycerol-1-phosphate dehydrogenase family. As to quaternary structure, homodimer. Requires Zn(2+) as cofactor.

The protein resides in the cytoplasm. The enzyme catalyses sn-glycerol 1-phosphate + NAD(+) = dihydroxyacetone phosphate + NADH + H(+). It carries out the reaction sn-glycerol 1-phosphate + NADP(+) = dihydroxyacetone phosphate + NADPH + H(+). It functions in the pathway membrane lipid metabolism; glycerophospholipid metabolism. Its function is as follows. Catalyzes the NAD(P)H-dependent reduction of dihydroxyacetonephosphate (DHAP or glycerone phosphate) to glycerol 1-phosphate (G1P). The G1P thus generated is used as the glycerophosphate backbone of phospholipids in the cellular membranes of Archaea. The chain is Glycerol-1-phosphate dehydrogenase [NAD(P)+] from Cenarchaeum symbiosum (strain A).